Consider the following 306-residue polypeptide: Ribosomal protein L11 methyltransferase (306 aa).

Residues T154, G179, D201, and N242 each contribute to the S-adenosyl-L-methionine site.

The protein belongs to the methyltransferase superfamily. PrmA family.

The protein localises to the cytoplasm. It catalyses the reaction L-lysyl-[protein] + 3 S-adenosyl-L-methionine = N(6),N(6),N(6)-trimethyl-L-lysyl-[protein] + 3 S-adenosyl-L-homocysteine + 3 H(+). Its function is as follows. Methylates ribosomal protein L11. This chain is Ribosomal protein L11 methyltransferase, found in Xanthomonas euvesicatoria pv. vesicatoria (strain 85-10) (Xanthomonas campestris pv. vesicatoria).